Here is a 225-residue protein sequence, read N- to C-terminus: MNLPDTLLPCQRPRERLLRLGAPLLNDAELLALCLRTGRHGCNALELAQRLLTRHGGLRGIFALSAQELCTEPGLGVAKACSLLVAPELSRRSIEETLLGRQAMKHPEEVRRYCLTALAHQPVEHCIALYLDQQLQLLACGELERGTLGRASVFPREVVREALRLHAGAIILAHNHPSGNPQPSAADCAFTQQLSQALALVDIRLVDHIIVARDQALSMAERGLI.

Residues 103-225 (AMKHPEEVRR…ALSMAERGLI (123 aa)) form the MPN domain. H174, H176, and D187 together coordinate Zn(2+). A JAMM motif motif is present at residues 174 to 187 (HNHPSGNPQPSAAD).

The protein belongs to the UPF0758 family.

The sequence is that of UPF0758 protein BAV2405 from Bordetella avium (strain 197N).